The primary structure comprises 372 residues: Queuine tRNA-ribosyltransferase (372 aa).

Asp89 acts as the Proton acceptor in catalysis. Substrate is bound by residues Asp89 to Phe93, Asp161, and Gly232. An RNA binding region spans residues Gly262–Ser268. Residue Asp281 is the Nucleophile of the active site. Residues Thr286–Arg290 are RNA binding; important for wobble base 34 recognition. Zn(2+) contacts are provided by Cys319, Cys321, Cys324, and His351.

Belongs to the queuine tRNA-ribosyltransferase family. In terms of assembly, homodimer. Within each dimer, one monomer is responsible for RNA recognition and catalysis, while the other monomer binds to the replacement base PreQ1. Requires Zn(2+) as cofactor.

The catalysed reaction is 7-aminomethyl-7-carbaguanine + guanosine(34) in tRNA = 7-aminomethyl-7-carbaguanosine(34) in tRNA + guanine. It functions in the pathway tRNA modification; tRNA-queuosine biosynthesis. Its function is as follows. Catalyzes the base-exchange of a guanine (G) residue with the queuine precursor 7-aminomethyl-7-deazaguanine (PreQ1) at position 34 (anticodon wobble position) in tRNAs with GU(N) anticodons (tRNA-Asp, -Asn, -His and -Tyr). Catalysis occurs through a double-displacement mechanism. The nucleophile active site attacks the C1' of nucleotide 34 to detach the guanine base from the RNA, forming a covalent enzyme-RNA intermediate. The proton acceptor active site deprotonates the incoming PreQ1, allowing a nucleophilic attack on the C1' of the ribose to form the product. After dissociation, two additional enzymatic reactions on the tRNA convert PreQ1 to queuine (Q), resulting in the hypermodified nucleoside queuosine (7-(((4,5-cis-dihydroxy-2-cyclopenten-1-yl)amino)methyl)-7-deazaguanosine). This chain is Queuine tRNA-ribosyltransferase, found in Chlamydia trachomatis serovar A (strain ATCC VR-571B / DSM 19440 / HAR-13).